The primary structure comprises 355 residues: Alanine racemase (355 aa).

Lys-34 acts as the Proton acceptor; specific for D-alanine in catalysis. Position 34 is an N6-(pyridoxal phosphate)lysine (Lys-34). Arg-133 is a substrate binding site. The active-site Proton acceptor; specific for L-alanine is Tyr-249. Residue Met-297 coordinates substrate.

Belongs to the alanine racemase family. The cofactor is pyridoxal 5'-phosphate.

The enzyme catalyses L-alanine = D-alanine. Its pathway is amino-acid biosynthesis; D-alanine biosynthesis; D-alanine from L-alanine: step 1/1. Its function is as follows. Catalyzes the interconversion of L-alanine and D-alanine. May also act on other amino acids. The sequence is that of Alanine racemase (alr) from Rickettsia conorii (strain ATCC VR-613 / Malish 7).